Consider the following 750-residue polypeptide: Neprilysin (750 aa).

Residues 1 to 14 are compositionally biased toward polar residues; that stretch reads MGRSESQMDITDIN. Residues 1–20 are disordered; the sequence is MGRSESQMDITDINTPKPKK. Residue glycine 2 is the site of N-myristoyl glycine attachment. The Cytoplasmic portion of the chain corresponds to 2-28; the sequence is GRSESQMDITDINTPKPKKKQRWTPLE. 2 positions are modified to phosphoserine: serine 4 and serine 6. The Stop-transfer sequence signature appears at 16–23; that stretch reads PKPKKKQR. The chain crosses the membrane as a helical; Signal-anchor for type II membrane protein span at residues 29 to 51; the sequence is ISLSVLVLLLTVIAVTMIALYAT. At 52-750 the chain is on the extracellular side; it reads YDDGICKSSD…MNPEKKCRVW (699 aa). Residues 56-750 form the Peptidase M13 domain; the sequence is ICKSSDCIKS…MNPEKKCRVW (695 aa). 6 disulfides stabilise this stretch: cysteine 57–cysteine 62, cysteine 80–cysteine 735, cysteine 88–cysteine 695, cysteine 143–cysteine 411, cysteine 234–cysteine 242, and cysteine 621–cysteine 747. Arginine 103 serves as a coordination point for a peptide. A glycan (N-linked (GlcNAc...) asparagine) is linked at asparagine 145. Residues asparagine 285, asparagine 311, and asparagine 325 are each glycosylated (N-linked (GlcNAc...) asparagine). Histidine 584 contacts Zn(2+). Glutamate 585 is an active-site residue. Histidine 588 contributes to the Zn(2+) binding site. N-linked (GlcNAc...) asparagine glycosylation is present at asparagine 628. Glutamate 647 lines the Zn(2+) pocket. Aspartate 651 serves as the catalytic Proton donor.

The protein belongs to the peptidase M13 family. Requires Zn(2+) as cofactor. In terms of processing, myristoylation is a determinant of membrane targeting. Post-translationally, glycosylation at Asn-628 is necessary both for surface expression and neutral endopeptidase activity.

It is found in the cell membrane. The catalysed reaction is Preferential cleavage of polypeptides between hydrophobic residues, particularly with Phe or Tyr at P1'.. It catalyses the reaction substance P + H2O = substance P(1-9) + L-Leu-L-Met-NH2. It carries out the reaction substance P + H2O = substance P(1-7) + L-Phe-Gly-L-Leu-L-Met-NH2. The enzyme catalyses neurotensin + H2O = neurotensin(1-11) + L-isoleucyl-L-leucine. The catalysed reaction is neurotensin + H2O = neurotensin(1-10) + L-tyrosyl-L-isoleucyl-L-leucine. With respect to regulation, inhibited by mixanpril, an orally-active drug used for the treatment of hypertension. Thermolysin-like specificity, but is almost confined on acting on polypeptides of up to 30 amino acids. Biologically important in the destruction of opioid peptides such as Met- and Leu-enkephalins by cleavage of a Gly-Phe bond. Catalyzes cleavage of bradykinin, substance P and neurotensin peptides. Able to cleave angiotensin-1, angiotensin-2 and angiotensin 1-9. Involved in the degradation of atrial natriuretic factor (ANF) and brain natriuretic factor (BNP(1-32)). Displays UV-inducible elastase activity toward skin preelastic and elastic fibers. The protein is Neprilysin (MME) of Oryctolagus cuniculus (Rabbit).